A 592-amino-acid polypeptide reads, in one-letter code: Imidazole glycerol phosphate synthase hisHF, chloroplastic (592 aa).

The transit peptide at 1–55 directs the protein to the chloroplast; it reads MEATAAPFSSIVSSRQNFSSSSSIRASSPASLFLSQKSIGNVNRKFKSPRSLSVR. Positions 63–271 constitute a Glutamine amidotransferase type-1 domain; that stretch reads VVTLLDYGAG…LHPKLPATQK (209 aa). Active-site for GATase activity residues include Cys-141, His-246, and Glu-248. The tract at residues 280–592 is cyclase; sequence LAKRVIACLD…LQEERIEVRI (313 aa). Active-site residues include Asp-289 and Asp-447.

The protein in the C-terminal section; belongs to the HisA/HisF family.

It is found in the plastid. Its subcellular location is the chloroplast. The catalysed reaction is 5-[(5-phospho-1-deoxy-D-ribulos-1-ylimino)methylamino]-1-(5-phospho-beta-D-ribosyl)imidazole-4-carboxamide + L-glutamine = D-erythro-1-(imidazol-4-yl)glycerol 3-phosphate + 5-amino-1-(5-phospho-beta-D-ribosyl)imidazole-4-carboxamide + L-glutamate + H(+). It carries out the reaction L-glutamine + H2O = L-glutamate + NH4(+). It participates in amino-acid biosynthesis; L-histidine biosynthesis; L-histidine from 5-phospho-alpha-D-ribose 1-diphosphate: step 5/9. Its function is as follows. IGPS catalyzes the conversion of PRFAR and glutamine to IGP, AICAR and glutamate. The glutaminase domain produces the ammonia necessary for the cyclase domain to produce IGP and AICAR from PRFAR. The ammonia is channeled to the active site of the cyclase domain. This Arabidopsis thaliana (Mouse-ear cress) protein is Imidazole glycerol phosphate synthase hisHF, chloroplastic (HISN4).